The chain runs to 495 residues: Glutamyl-tRNA(Gln) amidotransferase subunit A (495 aa).

Active-site charge relay system residues include lysine 75 and serine 150. The active-site Acyl-ester intermediate is the serine 174.

The protein belongs to the amidase family. GatA subfamily. Heterotrimer of A, B and C subunits.

The enzyme catalyses L-glutamyl-tRNA(Gln) + L-glutamine + ATP + H2O = L-glutaminyl-tRNA(Gln) + L-glutamate + ADP + phosphate + H(+). In terms of biological role, allows the formation of correctly charged Gln-tRNA(Gln) through the transamidation of misacylated Glu-tRNA(Gln) in organisms which lack glutaminyl-tRNA synthetase. The reaction takes place in the presence of glutamine and ATP through an activated gamma-phospho-Glu-tRNA(Gln). The protein is Glutamyl-tRNA(Gln) amidotransferase subunit A of Paraburkholderia phytofirmans (strain DSM 17436 / LMG 22146 / PsJN) (Burkholderia phytofirmans).